The chain runs to 149 residues: Glutamyl-tRNA(Gln) amidotransferase subunit C, mitochondrial (149 aa).

This sequence belongs to the GatC family. In terms of assembly, subunit of the heterotrimeric GatCAB amidotransferase (AdT) complex, composed of A, B and C subunits.

It is found in the mitochondrion. The enzyme catalyses L-glutamyl-tRNA(Gln) + L-glutamine + ATP + H2O = L-glutaminyl-tRNA(Gln) + L-glutamate + ADP + phosphate + H(+). Allows the formation of correctly charged Gln-tRNA(Gln) through the transamidation of misacylated Glu-tRNA(Gln) in the mitochondria. The reaction takes place in the presence of glutamine and ATP through an activated gamma-phospho-Glu-tRNA(Gln). This Trichoplax adhaerens (Trichoplax reptans) protein is Glutamyl-tRNA(Gln) amidotransferase subunit C, mitochondrial.